Here is a 635-residue protein sequence, read N- to C-terminus: MNLEIVDLFNGHVNSIPNILPHQLATLDYLVRSIIDENKSVLLFHIMGSGKTIIALLFALVASRFKKVYILVPNINILKIFNYSMDVAINLFNSEYILENIFIHSTTSFYSLNYNDNVINYNGLSRYNNAIFIIDEAHNIFGNNTGELMTVIKNKNKIPFLLLSGSPITNTPITLSNIISLMSDENINFGDIIIQGKKVFQILLNENGVNVLKNILKGRISYYEMPSTDLPKVQYHGKKFLDTRVVYCHMSKLQEKDYNNVRKLCNNEMFEKNMNNVSLAVLGQLNFINNLDILFQEQDKELYPNLKISNGILYGDELTTLNISSKFKYFIGKITSLTGKQFIYFSNSTYGGLIIKYIMLSNGYSEYNGSQGTNPKLINGKPKTFAIVTSKMKSSLEDLLNVYNSQLNKDGSQIMFLFSSNIMSESYTLKEVRNIWFMTIPDTFSQYNQILGRSIRKFSYFDISKPVNVYLLATVYADFDDDITSLEDYSLDEINTLPFDIKKLLYLKFKTKETNRIYSILQNISDTYRMPPHPYIVELVLGEIVRQFFYHHSRISFDSKELINAIQLVLPNIDMAKKYINEVVNGHFFVSNKVFDKSLLYRYKNDIITVPFKLSHERFVWGVNFRKEYNVVSSP.

Positions 32–185 (RSIIDENKSV…SNIISLMSDE (154 aa)) constitute a Helicase ATP-binding domain. ATP is bound at residue 45–52 (HIMGSGKT). Residues 135–138 (DEAH) carry the DEXH box motif. Residues 326–505 (KFKYFIGKIT…TLPFDIKKLL (180 aa)) enclose the Helicase C-terminal domain.

This sequence belongs to the helicase family. VETF subfamily. Heterodimer of a 70 kDa and a 82 kDa subunit.

The protein resides in the virion. Its function is as follows. Acts with RNA polymerase to initiate transcription from early gene promoters. A DNA-dependent ATPase activity is associated with VETF. The protein is Early transcription factor 70 kDa subunit (VETFS) of Erythrocebus patas (Red guenon).